The following is a 191-amino-acid chain: Aminodeoxychorismate synthase component 2 (191 aa).

Positions 1–191 constitute a Glutamine amidotransferase type-1 domain; that stretch reads MLLLIDNYDS…HQLLDNFLNR (191 aa). Active-site residues include cysteine 79, histidine 172, and glutamate 174.

Monomer. Heterodimer consisting of two non-identical subunits: a glutamine amidotransferase subunit (PabA) and a aminodeoxychorismate synthase subunit (PabB).

It catalyses the reaction chorismate + L-glutamine = 4-amino-4-deoxychorismate + L-glutamate. Its pathway is cofactor biosynthesis; tetrahydrofolate biosynthesis; 4-aminobenzoate from chorismate: step 1/2. Part of a heterodimeric complex that catalyzes the two-step biosynthesis of 4-amino-4-deoxychorismate (ADC), a precursor of p-aminobenzoate (PABA) and tetrahydrofolate. In the first step, a glutamine amidotransferase (PabA) generates ammonia as a substrate that, along with chorismate, is used in the second step, catalyzed by aminodeoxychorismate synthase (PabB) to produce ADC. PabA converts glutamine into glutamate only in the presence of stoichiometric amounts of PabB. This is Aminodeoxychorismate synthase component 2 (pabA) from Serratia marcescens.